Here is a 615-residue protein sequence, read N- to C-terminus: DNA mismatch repair protein MutL (615 aa).

The disordered stretch occupies residues 363–397; that stretch reads FAEPAVREPVAPRYTPAPASGSRPAAPWPNAQPGY. Positions 378–391 are enriched in low complexity; that stretch reads PAPASGSRPAAPWP.

It belongs to the DNA mismatch repair MutL/HexB family.

This protein is involved in the repair of mismatches in DNA. It is required for dam-dependent methyl-directed DNA mismatch repair. May act as a 'molecular matchmaker', a protein that promotes the formation of a stable complex between two or more DNA-binding proteins in an ATP-dependent manner without itself being part of a final effector complex. The chain is DNA mismatch repair protein MutL from Escherichia coli O157:H7 (strain EC4115 / EHEC).